The primary structure comprises 104 residues: Gastrin (104 aa).

The N-terminal stretch at 1–21 is a signal peptide; it reads MQRLCAYVLIHVLALAACSEA. Positions 22–58 are excised as a propeptide; sequence SWKPGFQLQDASSGPGANRGKEPHELDRLGPASHHRR. The segment at 27 to 67 is disordered; that stretch reads FQLQDASSGPGANRGKEPHELDRLGPASHHRRQLGLQGPPH. The span at 40–49 shows a compositional bias: basic and acidic residues; the sequence is RGKEPHELDR. Glutamine 59 bears the Pyrrolidone carboxylic acid; in form big gastrin mark. Pyrrolidone carboxylic acid; in form gastrin is present on glutamine 76. The residue at position 87 (tyrosine 87) is a Sulfotyrosine; partial. Phenylalanine 92 is subject to Phenylalanine amide. At serine 96 the chain carries Phosphoserine. Positions 96 to 104 are excised as a propeptide; the sequence is SAEEGDQRP.

Belongs to the gastrin/cholecystokinin family. In terms of processing, sulfation enhances proteolytic processing, and blocks peptide degradation. Levels of sulfation differ between proteolytically-cleaved gastrins. Thus, gastrin-6 is almost 73% sulfated, whereas the larger gastrins are less than 50% sulfated. Sulfation levels are also tissue-specific.

It is found in the secreted. Functionally, gastrin stimulates the stomach mucosa to produce and secrete hydrochloric acid and the pancreas to secrete its digestive enzymes. It also stimulates smooth muscle contraction and increases blood circulation and water secretion in the stomach and intestine. The chain is Gastrin (GAST) from Sus scrofa (Pig).